The chain runs to 303 residues: Recombination-associated protein RdgC (303 aa).

It belongs to the RdgC family.

It is found in the cytoplasm. The protein resides in the nucleoid. In terms of biological role, may be involved in recombination. This is Recombination-associated protein RdgC from Salmonella agona (strain SL483).